The following is a 489-amino-acid chain: Toxin coregulated pilus biosynthesis outer membrane protein C (489 aa).

The signal sequence occupies residues 1 to 16 (MKKTIISTLVIGLVSG). The N-palmitoyl cysteine moiety is linked to residue cysteine 17. A lipid anchor (S-diacylglycerol cysteine) is attached at cysteine 17. A run of 4 helical transmembrane segments spans residues 174-190 (FSSSMQIGGTSGTSSGL), 294-308 (AISLSQVGGGLGASY), 402-417 (QLVSIGTAQGITLPTV), and 442-457 (NYIQNSNGVQLLGGGT).

It is found in the cell membrane. Involved in TCP pilus biogenesis. This is Toxin coregulated pilus biosynthesis outer membrane protein C (tcpC) from Vibrio cholerae serotype O1 (strain ATCC 39315 / El Tor Inaba N16961).